We begin with the raw amino-acid sequence, 375 residues long: Actin (375 aa).

It belongs to the actin family.

The protein resides in the cytoplasm. It is found in the cytoskeleton. The enzyme catalyses ATP + H2O = ADP + phosphate + H(+). Its function is as follows. Actins are highly conserved proteins that are involved in various types of cell motility and are ubiquitously expressed in all eukaryotic cells. The sequence is that of Actin from Sterkiella cavicola (Ciliate).